Reading from the N-terminus, the 335-residue chain is Large ribosomal subunit protein uL10 (335 aa).

The segment at 304–335 is disordered; it reads GAAAPVEEAPVEEKKEEKKEEAAAPAGLGMLF. The segment covering 314 to 325 has biased composition (basic and acidic residues); it reads VEEKKEEKKEEA.

Belongs to the universal ribosomal protein uL10 family. In terms of assembly, part of the 50S ribosomal subunit. Homodimer, it forms part of the ribosomal stalk which helps the ribosome interact with GTP-bound translation factors. Forms both a pentameric L10(L12)2(L12)2 and heptameric L10(L12)2(L12)2(L12)2 complex, where L10 forms an elongated spine to which the L12 dimers bind in a sequential fashion. The proportion of heptameric complexes increases during cell growth.

In terms of biological role, forms part of the ribosomal stalk, playing a central role in the interaction of the ribosome with GTP-bound translation factors. The sequence is that of Large ribosomal subunit protein uL10 from Methanococcus maripaludis (strain DSM 14266 / JCM 13030 / NBRC 101832 / S2 / LL).